We begin with the raw amino-acid sequence, 200 residues long: NAD(P)H dehydrogenase (quinone) (200 aa).

Residues 4–191 enclose the Flavodoxin-like domain; it reads ILVLYHSLWG…TIARFQGRHV (188 aa). Residues 10 to 15 and 79 to 81 contribute to the FMN site; these read SLWGHV and TRF. Trp12 contacts NAD(+). Trp99 provides a ligand contact to substrate. FMN-binding positions include 114-120 and His135; that span reads STATQHG.

Belongs to the WrbA family. FMN is required as a cofactor.

The catalysed reaction is a quinone + NADH + H(+) = a quinol + NAD(+). It carries out the reaction a quinone + NADPH + H(+) = a quinol + NADP(+). The chain is NAD(P)H dehydrogenase (quinone) from Acidithiobacillus ferrooxidans (strain ATCC 53993 / BNL-5-31) (Leptospirillum ferrooxidans (ATCC 53993)).